The chain runs to 217 residues: Ribosomal RNA small subunit methyltransferase G (217 aa).

S-adenosyl-L-methionine-binding positions include glycine 74, leucine 79, 125–126 (IQ), and arginine 143.

The protein belongs to the methyltransferase superfamily. RNA methyltransferase RsmG family.

It localises to the cytoplasm. The catalysed reaction is guanosine(527) in 16S rRNA + S-adenosyl-L-methionine = N(7)-methylguanosine(527) in 16S rRNA + S-adenosyl-L-homocysteine. Functionally, specifically methylates the N7 position of guanine in position 527 of 16S rRNA. The protein is Ribosomal RNA small subunit methyltransferase G of Syntrophotalea carbinolica (strain DSM 2380 / NBRC 103641 / GraBd1) (Pelobacter carbinolicus).